We begin with the raw amino-acid sequence, 573 residues long: DNA polymerase lambda (573 aa).

The 97-residue stretch at 35–131 (DARGWLSSLR…KLTDTDGFSL (97 aa)) folds into the BRCT domain. A disordered region spans residues 126–235 (TDGFSLSSPK…GPDPAPEALG (110 aa)). Polar residues predominate over residues 127–149 (DGFSLSSPKRSLNEPQPSKSGQD). The segment at 263–277 (KAYNVQGDKWRALGY) is DNA-binding. Lysine 310 serves as the catalytic Schiff-base intermediate with DNA. The segment at 343–346 (GTKT) is DNA-binding. DCTP contacts are provided by residues arginine 384, 415 to 418 (SFRR), and 424 to 427 (GDVD). Positions 418–427 (RGKVTCGDVD) are involved in primer binding. Residues aspartate 425, aspartate 427, and aspartate 488 each contribute to the Mn(2+) site. Positions 464–503 (ENGQQQKYLGVCRLPGAGQRHRRLDIIVVPYSEFACALLY) are DNA-binding. Asparagine 511 serves as a coordination point for dCTP.

The protein belongs to the DNA polymerase type-X family. In terms of assembly, interacts with PCNA. Interacts with PAXX; promoting POLL recruitment to double-strand breaks (DSBs) and stimulation of the end-filling activity of POLL. Interacts with XRCC4; promoting POLL recruitment to double-strand breaks (DSBs) and stimulation of the end-filling activity of POLL. Interacts with NHEJ1/XLF; promoting POLL recruitment to double-strand breaks (DSBs) and stimulation of the end-filling activity of POLL. Requires Mn(2+) as cofactor.

Its subcellular location is the nucleus. The enzyme catalyses DNA(n) + a 2'-deoxyribonucleoside 5'-triphosphate = DNA(n+1) + diphosphate. Its function is as follows. DNA polymerase that functions in several pathways of DNA repair. Involved in base excision repair (BER) responsible for repair of lesions that give rise to abasic (AP) sites in DNA. Also contributes to DNA double-strand break repair by non-homologous end joining and homologous recombination. Has both template-dependent and template-independent (terminal transferase) DNA polymerase activities. Also has a 5'-deoxyribose-5-phosphate lyase (dRP lyase) activity. This chain is DNA polymerase lambda, found in Rattus norvegicus (Rat).